The following is a 211-amino-acid chain: Probable nicotinate-nucleotide adenylyltransferase (211 aa).

Belongs to the NadD family.

The catalysed reaction is nicotinate beta-D-ribonucleotide + ATP + H(+) = deamido-NAD(+) + diphosphate. Its pathway is cofactor biosynthesis; NAD(+) biosynthesis; deamido-NAD(+) from nicotinate D-ribonucleotide: step 1/1. Catalyzes the reversible adenylation of nicotinate mononucleotide (NaMN) to nicotinic acid adenine dinucleotide (NaAD). The polypeptide is Probable nicotinate-nucleotide adenylyltransferase (Wigglesworthia glossinidia brevipalpis).